Consider the following 498-residue polypeptide: MMRKSQLQFNTELRVHHPPALFRSNKIICTIGPSSQSVEVLKDLMKAGLNVARMNFSHGTYEYHQKTIDNVRKAASELGIHVGIALDTKGPEIRTGLFPAGDVVIEAHKTVILTTDETFKEKGTAEKFYVDYMNITKVVPVGGHIFVDDGLLDLIVVKISGKDIECVAQNTHTISNRKGINLPNADVDLPAVSEKDLMDLQFGAKNRVDFVFASFIRNADQVNEVRQAFGGKIAVIAKIENYQGIDNIDAIIDAADGIMVARGDLGVEIPAEKVVIAQKMIMSKCNKVGKTVICATQMLDSMTHGPRPTRAEVSDVAKSVLDGADCVMLSGETAKGKYPVETVVYMSRICCETQVTMWNMAAFEAIKNLQSFPLIPEEAICSSAVNSIFELHAKAILVLTNTGRSAHMVSKYRPPVPIICASQELDVCRLLSITRGTIPVYYDTEKLGPDYDREKRVGLAIDVGKQMGVFKEGDVVVAVHADHHTKGFANQIRAIYIK.

Arginine 53 contacts substrate. K(+)-binding residues include asparagine 55, serine 57, aspartate 87, and threonine 88. 55–58 (NFSH) contributes to the ATP binding site. Positions 94 and 178 each coordinate ATP. Glutamate 240 lines the Mg(2+) pocket. Residues glycine 263, aspartate 264, and threonine 296 each coordinate substrate. Aspartate 264 serves as a coordination point for Mg(2+).

Belongs to the pyruvate kinase family. As to quaternary structure, homotetramer. Requires Mg(2+) as cofactor. K(+) serves as cofactor.

It carries out the reaction pyruvate + ATP = phosphoenolpyruvate + ADP + H(+). The protein operates within carbohydrate degradation; glycolysis; pyruvate from D-glyceraldehyde 3-phosphate: step 5/5. This chain is Pyruvate kinase (PYK), found in Trypanoplasma borreli.